The primary structure comprises 297 residues: Acetylglutamate kinase (297 aa).

Substrate contacts are provided by residues 70 to 71, Arg-92, and Asn-194; that span reads GG.

The protein belongs to the acetylglutamate kinase family. ArgB subfamily.

The protein localises to the cytoplasm. The catalysed reaction is N-acetyl-L-glutamate + ATP = N-acetyl-L-glutamyl 5-phosphate + ADP. It participates in amino-acid biosynthesis; L-arginine biosynthesis; N(2)-acetyl-L-ornithine from L-glutamate: step 2/4. Functionally, catalyzes the ATP-dependent phosphorylation of N-acetyl-L-glutamate. This is Acetylglutamate kinase from Herminiimonas arsenicoxydans.